The sequence spans 69 residues: Neurotoxin Cex7 (69 aa).

Residue A1 is a signal peptide. An LCN-type CS-alpha/beta domain is found at 2–67 (REGYLVSKST…TYPIPGKSCG (66 aa)). 4 cysteine pairs are disulfide-bonded: C13-C66, C17-C42, C26-C47, and C30-C49. Position 66 is a cysteine amide (C66). The propeptide occupies 67-69 (GKK).

The protein belongs to the long (4 C-C) scorpion toxin superfamily. Sodium channel inhibitor family. Beta subfamily. As to expression, expressed by the venom gland.

Its subcellular location is the secreted. Beta toxins bind voltage-independently at site-4 of sodium channels (Nav) and shift the voltage of activation toward more negative potentials thereby affecting sodium channel activation and promoting spontaneous and repetitive firing. The chain is Neurotoxin Cex7 from Centruroides exilicauda (Bark scorpion).